The following is a 169-amino-acid chain: Cell division inhibitor SulA (169 aa).

The interval 106–112 (ALRTGNY) is ftsZ binding. The lon protease binding stretch occupies residues 162–169 (KIHSNLYH).

The protein belongs to the SulA family. As to quaternary structure, interacts with FtsZ. Is rapidly cleaved and degraded by the Lon protease once DNA damage is repaired.

In terms of biological role, component of the SOS system and an inhibitor of cell division. Accumulation of SulA causes rapid cessation of cell division and the appearance of long, non-septate filaments. In the presence of GTP, binds a polymerization-competent form of FtsZ in a 1:1 ratio, thus inhibiting FtsZ polymerization and therefore preventing it from participating in the assembly of the Z ring. This mechanism prevents the premature segregation of damaged DNA to daughter cells during cell division. In Escherichia coli O7:K1 (strain IAI39 / ExPEC), this protein is Cell division inhibitor SulA.